Reading from the N-terminus, the 420-residue chain is Histidine--tRNA ligase (420 aa).

Belongs to the class-II aminoacyl-tRNA synthetase family. As to quaternary structure, homodimer.

The protein resides in the cytoplasm. The enzyme catalyses tRNA(His) + L-histidine + ATP = L-histidyl-tRNA(His) + AMP + diphosphate + H(+). In Desulforudis audaxviator (strain MP104C), this protein is Histidine--tRNA ligase.